Here is a 207-residue protein sequence, read N- to C-terminus: Outer-membrane lipoprotein LolB (207 aa).

An N-terminal signal peptide occupies residues M1–A21. Residue C22 is the site of N-palmitoyl cysteine attachment. C22 carries S-diacylglycerol cysteine lipidation.

This sequence belongs to the LolB family. Monomer.

It is found in the cell outer membrane. In terms of biological role, plays a critical role in the incorporation of lipoproteins in the outer membrane after they are released by the LolA protein. This is Outer-membrane lipoprotein LolB from Escherichia coli O127:H6 (strain E2348/69 / EPEC).